A 55-amino-acid chain; its full sequence is ATP synthase F(0) complex subunit 8 (55 aa).

Residues 4 to 24 (LNPAPWFMIFMFTWAIFLTIL) form a helical membrane-spanning segment. Residues 34–55 (PNEPSPQGMTTPKTAPWNWPWH) form a disordered region.

This sequence belongs to the ATPase protein 8 family. Component of the ATP synthase complex composed at least of ATP5F1A/subunit alpha, ATP5F1B/subunit beta, ATP5MC1/subunit c (homooctomer), MT-ATP6/subunit a, MT-ATP8/subunit 8, ATP5ME/subunit e, ATP5MF/subunit f, ATP5MG/subunit g, ATP5MK/subunit k, ATP5MJ/subunit j, ATP5F1C/subunit gamma, ATP5F1D/subunit delta, ATP5F1E/subunit epsilon, ATP5PF/subunit F6, ATP5PB/subunit b, ATP5PD/subunit d, ATP5PO/subunit OSCP. ATP synthase complex consists of a soluble F(1) head domain (subunits alpha(3) and beta(3)) - the catalytic core - and a membrane F(0) domain - the membrane proton channel (subunits c, a, 8, e, f, g, k and j). These two domains are linked by a central stalk (subunits gamma, delta, and epsilon) rotating inside the F1 region and a stationary peripheral stalk (subunits F6, b, d, and OSCP).

It is found in the mitochondrion membrane. Subunit 8, of the mitochondrial membrane ATP synthase complex (F(1)F(0) ATP synthase or Complex V) that produces ATP from ADP in the presence of a proton gradient across the membrane which is generated by electron transport complexes of the respiratory chain. ATP synthase complex consist of a soluble F(1) head domain - the catalytic core - and a membrane F(1) domain - the membrane proton channel. These two domains are linked by a central stalk rotating inside the F(1) region and a stationary peripheral stalk. During catalysis, ATP synthesis in the catalytic domain of F(1) is coupled via a rotary mechanism of the central stalk subunits to proton translocation. In vivo, can only synthesize ATP although its ATP hydrolase activity can be activated artificially in vitro. Part of the complex F(0) domain. The chain is ATP synthase F(0) complex subunit 8 from Gadus morhua (Atlantic cod).